Consider the following 62-residue polypeptide: Photosystem II reaction center protein Z (62 aa).

The next 2 membrane-spanning stretches (helical) occupy residues 8-28 and 41-61; these read AVFA…VVFA and FSGT…NSLI.

It belongs to the PsbZ family. In terms of assembly, PSII is composed of 1 copy each of membrane proteins PsbA, PsbB, PsbC, PsbD, PsbE, PsbF, PsbH, PsbI, PsbJ, PsbK, PsbL, PsbM, PsbT, PsbY, PsbZ, Psb30/Ycf12, at least 3 peripheral proteins of the oxygen-evolving complex and a large number of cofactors. It forms dimeric complexes.

It is found in the plastid. Its subcellular location is the chloroplast thylakoid membrane. Its function is as follows. May control the interaction of photosystem II (PSII) cores with the light-harvesting antenna, regulates electron flow through the 2 photosystem reaction centers. PSII is a light-driven water plastoquinone oxidoreductase, using light energy to abstract electrons from H(2)O, generating a proton gradient subsequently used for ATP formation. This is Photosystem II reaction center protein Z from Gossypium barbadense (Sea Island cotton).